A 701-amino-acid chain; its full sequence is Aryl hydrocarbon receptor repressor (701 aa).

The bHLH domain maps to threonine 25 to lysine 78. The region spanning proline 106–proline 176 is the PAS domain. Residues threonine 409–serine 430 show a composition bias toward polar residues. The interval threonine 409 to cysteine 432 is disordered. The needed for transcriptional repression stretch occupies residues alanine 555 to proline 701. Residues lysine 583 and lysine 660 each participate in a glycyl lysine isopeptide (Lys-Gly) (interchain with G-Cter in SUMO2) cross-link.

Interacts with ARNT, ANKRA2, HDAC4 and HDAC5. Interacts with ARNT; forms a heterodimer with ARNT.

It is found in the cytoplasm. The protein localises to the nucleus. Functionally, mediates dioxin toxicity and is involved in regulation of cell growth and differentiation. Represses the transcription activity of AHR by competing with this transcription factor for heterodimer formation with the ARNT and subsequently binding to the xenobiotic response element (XRE) sequence present in the promoter regulatory region of variety of genes. Represses CYP1A1 by binding the XRE sequence and recruiting ANKRA2, HDAC4 and/or HDAC5. Autoregulates its expression by associating with its own XRE site. This Mus musculus (Mouse) protein is Aryl hydrocarbon receptor repressor (Ahrr).